We begin with the raw amino-acid sequence, 674 residues long: NADH-ubiquinone oxidoreductase chain 5 (674 aa).

17 consecutive transmembrane segments (helical) span residues 27-47 (GAHI…IVAF), 81-101 (LTVS…IFSV), 113-133 (FFAY…GDNY), 135-155 (IMFV…NFWF), 173-193 (VGDM…GNLD), 200-220 (IAPF…LLAA), 242-262 (TPVS…YLLL), 275-295 (LIVI…TGLL), 301-323 (RVIA…LSQY), 325-345 (VALF…LAAG), 363-383 (LIGF…SLIA), 410-430 (VAYW…LRLI), 453-473 (TIVM…GYVA), 514-534 (AIGT…LPVF), 556-576 (YVDV…GYVI), 616-636 (ALYL…PVLL), and 639-659 (ALIN…IPYI).

This sequence belongs to the complex I subunit 5 family.

It is found in the mitochondrion inner membrane. The enzyme catalyses a ubiquinone + NADH + 5 H(+)(in) = a ubiquinol + NAD(+) + 4 H(+)(out). In terms of biological role, core subunit of the mitochondrial membrane respiratory chain NADH dehydrogenase (Complex I) that is believed to belong to the minimal assembly required for catalysis. Complex I functions in the transfer of electrons from NADH to the respiratory chain. The immediate electron acceptor for the enzyme is believed to be ubiquinone. The protein is NADH-ubiquinone oxidoreductase chain 5 (ND5) of Mycosarcoma maydis (Corn smut fungus).